We begin with the raw amino-acid sequence, 211 residues long: Guanylate kinase (211 aa).

In terms of domain architecture, Guanylate kinase-like spans 7–187; it reads GLLIILSGPS…AADRIIAIIR (181 aa). Residue 14 to 21 coordinates ATP; sequence GPSGVGKA.

Belongs to the guanylate kinase family.

The protein localises to the cytoplasm. It catalyses the reaction GMP + ATP = GDP + ADP. Essential for recycling GMP and indirectly, cGMP. This Aster yellows witches'-broom phytoplasma (strain AYWB) protein is Guanylate kinase.